Consider the following 286-residue polypeptide: ATP synthase gamma chain (286 aa).

Belongs to the ATPase gamma chain family. As to quaternary structure, F-type ATPases have 2 components, CF(1) - the catalytic core - and CF(0) - the membrane proton channel. CF(1) has five subunits: alpha(3), beta(3), gamma(1), delta(1), epsilon(1). CF(0) has three main subunits: a, b and c.

It is found in the cell inner membrane. Produces ATP from ADP in the presence of a proton gradient across the membrane. The gamma chain is believed to be important in regulating ATPase activity and the flow of protons through the CF(0) complex. This Dechloromonas aromatica (strain RCB) protein is ATP synthase gamma chain.